Reading from the N-terminus, the 245-residue chain is Transmembrane protein 116 (245 aa).

4 helical membrane-spanning segments follow: residues 24–44 (MAFV…FCLG), 88–108 (GIAI…VLLI), 141–161 (FYPV…IIKL), and 173–195 (LYVL…YGWT).

It localises to the membrane. The chain is Transmembrane protein 116 (TMEM116) from Homo sapiens (Human).